The following is a 355-amino-acid chain: Protein RecA (355 aa).

Position 72–79 (72–79) interacts with ATP; that stretch reads GPESSGKT.

Belongs to the RecA family.

The protein resides in the cytoplasm. In terms of biological role, can catalyze the hydrolysis of ATP in the presence of single-stranded DNA, the ATP-dependent uptake of single-stranded DNA by duplex DNA, and the ATP-dependent hybridization of homologous single-stranded DNAs. It interacts with LexA causing its activation and leading to its autocatalytic cleavage. The sequence is that of Protein RecA from Wolbachia pipientis subsp. Culex pipiens (strain wPip).